Reading from the N-terminus, the 941-residue chain is Isoleucine--tRNA ligase (941 aa).

Positions 58–68 match the 'HIGH' region motif; sequence PYANGDIHIGH. Glu562 contacts L-isoleucyl-5'-AMP. Residues 603–607 carry the 'KMSKS' region motif; that stretch reads KMSKS. Lys606 serves as a coordination point for ATP. Residues Cys904, Cys907, Cys924, and Cys927 each contribute to the Zn(2+) site.

It belongs to the class-I aminoacyl-tRNA synthetase family. IleS type 1 subfamily. Monomer. Requires Zn(2+) as cofactor.

The protein localises to the cytoplasm. The catalysed reaction is tRNA(Ile) + L-isoleucine + ATP = L-isoleucyl-tRNA(Ile) + AMP + diphosphate. Its function is as follows. Catalyzes the attachment of isoleucine to tRNA(Ile). As IleRS can inadvertently accommodate and process structurally similar amino acids such as valine, to avoid such errors it has two additional distinct tRNA(Ile)-dependent editing activities. One activity is designated as 'pretransfer' editing and involves the hydrolysis of activated Val-AMP. The other activity is designated 'posttransfer' editing and involves deacylation of mischarged Val-tRNA(Ile). The polypeptide is Isoleucine--tRNA ligase (Alkalilimnicola ehrlichii (strain ATCC BAA-1101 / DSM 17681 / MLHE-1)).